The chain runs to 149 residues: Deoxyuridine 5'-triphosphate nucleotidohydrolase (149 aa).

Residues 68-70 (RSG), asparagine 81, 85-87 (LID), and methionine 95 contribute to the substrate site.

It belongs to the dUTPase family. Mg(2+) is required as a cofactor.

It catalyses the reaction dUTP + H2O = dUMP + diphosphate + H(+). Its pathway is pyrimidine metabolism; dUMP biosynthesis; dUMP from dCTP (dUTP route): step 2/2. Functionally, this enzyme is involved in nucleotide metabolism: it produces dUMP, the immediate precursor of thymidine nucleotides and it decreases the intracellular concentration of dUTP so that uracil cannot be incorporated into DNA. This Bordetella bronchiseptica (strain ATCC BAA-588 / NCTC 13252 / RB50) (Alcaligenes bronchisepticus) protein is Deoxyuridine 5'-triphosphate nucleotidohydrolase.